We begin with the raw amino-acid sequence, 454 residues long: tRNA modification GTPase MnmE (454 aa).

(6S)-5-formyl-5,6,7,8-tetrahydrofolate is bound by residues R23, E80, and K120. In terms of domain architecture, TrmE-type G spans 216–377; that stretch reads GMKVVIAGRP…LRNHLKQSMG (162 aa). N226 contributes to the K(+) binding site. Residues 226-231, 245-251, 270-273, 335-338, and 358-360 each bind GTP; these read NAGKSS, TDIAGTT, DTAG, NKAD, and SAR. Residue S230 coordinates Mg(2+). T245, I247, and T250 together coordinate K(+). Residue T251 coordinates Mg(2+). Residue K454 coordinates (6S)-5-formyl-5,6,7,8-tetrahydrofolate.

The protein belongs to the TRAFAC class TrmE-Era-EngA-EngB-Septin-like GTPase superfamily. TrmE GTPase family. Homodimer. Heterotetramer of two MnmE and two MnmG subunits. Requires K(+) as cofactor.

Its subcellular location is the cytoplasm. Functionally, exhibits a very high intrinsic GTPase hydrolysis rate. Involved in the addition of a carboxymethylaminomethyl (cmnm) group at the wobble position (U34) of certain tRNAs, forming tRNA-cmnm(5)s(2)U34. In Klebsiella pneumoniae subsp. pneumoniae (strain ATCC 700721 / MGH 78578), this protein is tRNA modification GTPase MnmE.